The primary structure comprises 485 residues: MENLPNHEENDDVGYHQSPGPIDPNDHSASETPVYSTMSTDSFAYHRTCSETSGGGFSDQIDETSSFCTEASPSDWPVLTESNNSASSNFPTVFDLKHNQIETDEHLAVQEISEPELETMKERFSKLLLGEDMSGSGKGVCTAVTISNAITNLYATVFGQNLRLEPLEIEQKTTWKREMNCLLSVCDYIFEFIPKSQNLSNGATVEVMESRPRADIYINLPALRKLDSMLMEALDSFQKTEFWYAEEGSLSMKSTRSATGSFRKVIVQRKEEKWWLPIPLVPLQGLSEKARKQLKSKRESTNQIHKAAMAINSSILGEMDIPDSYMATLPKSGKASTGDAIYRHMTSSGRFSPEKLLDRLKIVSEHEALQLADRVEASMYTWRRKACLNNSKSSWNMVKDLMSITERSDKNYVLAERAESLLFCLKQRYPELSQTSLDICKIHCNKDVGKAVLESYSRVLEGLAFNIVAWIDDVLYVDKTMRGEE.

A disordered region spans residues 1–36 (MENLPNHEENDDVGYHQSPGPIDPNDHSASETPVYS). In terms of domain architecture, PRONE spans 107-485 (LAVQEISEPE…YVDKTMRGEE (379 aa)).

As to quaternary structure, interacts with ARC10/ROP11. Expressed in the vascular tissues of roots, leaves, sepals, petals and siliques.

In terms of biological role, guanine-nucleotide exchange factor (GEF) that acts as an activator of Rop (Rho of plants) GTPases by promoting the exchange of GDP for GTP. This is Rop guanine nucleotide exchange factor 2 (ROPGEF2) from Arabidopsis thaliana (Mouse-ear cress).